A 95-amino-acid polypeptide reads, in one-letter code: uncharacterized protein (95 aa).

The disordered stretch occupies residues 1–73; sequence MAHFKDDLQT…AQQPSMRTEL (73 aa). Polar residues-rich tracts occupy residues 42–52 and 62–73; these read SNHSPSVQESP and GSAQQPSMRTEL.

This is an uncharacterized protein from Homo sapiens (Human).